Reading from the N-terminus, the 356-residue chain is Protein U8 (356 aa).

It belongs to the herpesviridae US22 family.

The chain is Protein U8 (U8) from Homo sapiens (Human).